Reading from the N-terminus, the 221-residue chain is Bcl-2-related ovarian killer protein homolog A (221 aa).

Residues 32–44 (KVLCRDYIHSRLH) carry the BH4 motif. Residues 64–80 (VSSVLLWLGDELEYLRP) carry the BH3 motif. The short motif at 110–140 (EIFSTEYSRKGLEKHKGVTWGKIVSLYAVAG) is the BH1 element. A BH2 motif is present at residues 173 to 187 (WLKKRGGWADITKCV). Residues 198–218 (WLVTAACACGHYLKAVVFYLL) form a helical membrane-spanning segment.

The protein belongs to the Bcl-2 family. As to expression, strongest expression in ovary and eye, weaker expression in gut, kidney and brain. Little expression in liver or heart.

Its subcellular location is the membrane. May play a role in apoptosis. Does not appear to show pro-apoptotic activity when expressed ectopically in early embryos. The chain is Bcl-2-related ovarian killer protein homolog A from Danio rerio (Zebrafish).